The chain runs to 531 residues: Ceramide kinase (531 aa).

Positions Met1–Trp115 are essential for enzyme activity. A required for binding to sulfatide and phosphoinositides region spans residues Met1–Ser125. Positions Ser128–Asn278 constitute a DAGKc domain. ATP contacts are provided by residues Asn138–Phe140 and Thr170–Asn174. Gly195–Gly198 serves as a coordination point for substrate. The active-site Proton donor/acceptor is the Asp197. ATP-binding positions include Glu202, Gly239–Thr241, Arg304, and Arg310. 2 positions are modified to phosphoserine: Ser340 and Ser408. Asp502–Glu504 lines the ATP pocket.

Ca(2+) serves as cofactor. It depends on Mg(2+) as a cofactor. As to expression, high level expression in heart, brain, testis and pancreas; low expression in spleen, liver and lung; not detected in skeletal muscle.

The protein resides in the cytoplasm. The protein localises to the cell membrane. It catalyses the reaction an N-acylsphing-4-enine + ATP = an N-acylsphing-4-enine 1-phosphate + ADP + H(+). It carries out the reaction N-(hexanoyl)sphing-4-enine + ATP = N-hexanoylsphing-4-enine 1-phosphate + ADP + H(+). The catalysed reaction is N-(acetyl)-sphing-4-enine + ATP = N-(acetyl)-sphing-4-enine-1-phosphate + ADP + H(+). The enzyme catalyses N-hexadecanoylsphing-4-enine + ATP = N-(hexadecanoyl)-sphing-4-enine-1-phosphate + ADP + H(+). It catalyses the reaction N-hexanoyl-(4R)-hydroxysphinganine + ATP = N-hexanoyl-(4R)-hydroxysphinganine-1-phosphate + ADP + H(+). Catalyzes specifically the phosphorylation of ceramide to form ceramide 1-phosphate. Acts efficiently on natural and analog ceramides (C6, C8, C16 ceramides, and C8-dihydroceramide), to a lesser extent on C2-ceramide and C6-dihydroceramide, but not on other lipids, such as various sphingosines. Shows a greater preference for D-erythro isomer of ceramides. Binds phosphoinositides. The sequence is that of Ceramide kinase (Cerk) from Mus musculus (Mouse).